Here is a 62-residue protein sequence, read N- to C-terminus: Photosystem II reaction center protein Z (62 aa).

2 helical membrane-spanning segments follow: residues 8–28 (AVFALIAISFLLVIGVPVVLA) and 41–61 (FSGASLWIGLVFLVGILNSFI).

This sequence belongs to the PsbZ family. In terms of assembly, PSII is composed of 1 copy each of membrane proteins PsbA, PsbB, PsbC, PsbD, PsbE, PsbF, PsbH, PsbI, PsbJ, PsbK, PsbL, PsbM, PsbT, PsbY, PsbZ, Psb30/Ycf12, at least 3 peripheral proteins of the oxygen-evolving complex and a large number of cofactors. It forms dimeric complexes.

Its subcellular location is the plastid. The protein resides in the chloroplast thylakoid membrane. Its function is as follows. May control the interaction of photosystem II (PSII) cores with the light-harvesting antenna, regulates electron flow through the 2 photosystem reaction centers. PSII is a light-driven water plastoquinone oxidoreductase, using light energy to abstract electrons from H(2)O, generating a proton gradient subsequently used for ATP formation. The protein is Photosystem II reaction center protein Z of Marchantia polymorpha (Common liverwort).